The sequence spans 235 residues: Leucyl/phenylalanyl-tRNA--protein transferase (235 aa).

It belongs to the L/F-transferase family.

It localises to the cytoplasm. The catalysed reaction is N-terminal L-lysyl-[protein] + L-leucyl-tRNA(Leu) = N-terminal L-leucyl-L-lysyl-[protein] + tRNA(Leu) + H(+). The enzyme catalyses N-terminal L-arginyl-[protein] + L-leucyl-tRNA(Leu) = N-terminal L-leucyl-L-arginyl-[protein] + tRNA(Leu) + H(+). It catalyses the reaction L-phenylalanyl-tRNA(Phe) + an N-terminal L-alpha-aminoacyl-[protein] = an N-terminal L-phenylalanyl-L-alpha-aminoacyl-[protein] + tRNA(Phe). Functionally, functions in the N-end rule pathway of protein degradation where it conjugates Leu, Phe and, less efficiently, Met from aminoacyl-tRNAs to the N-termini of proteins containing an N-terminal arginine or lysine. The polypeptide is Leucyl/phenylalanyl-tRNA--protein transferase (Anaeromyxobacter sp. (strain Fw109-5)).